An 842-amino-acid polypeptide reads, in one-letter code: Glycogen phosphorylase, muscle form (842 aa).

Ser-2 carries the N-acetylserine modification. Ser-15 carries the post-translational modification Phosphoserine; by PHK; in form phosphorylase A. Positions 43 and 76 each coordinate AMP. Tyr-204 and Tyr-227 each carry phosphotyrosine. Arg-310–Ser-319 is an AMP binding site. Ser-430 is modified (phosphoserine). Tyr-473 is subject to Phosphotyrosine. Position 514 is a phosphoserine (Ser-514). Lys-681 is subject to N6-(pyridoxal phosphate)lysine. Phosphoserine occurs at positions 747 and 748.

It belongs to the glycogen phosphorylase family. In terms of assembly, homodimer. Homotetramer; to form the enzymatically active phosphorylase A. It depends on pyridoxal 5'-phosphate as a cofactor. Post-translationally, phosphorylation of Ser-15 converts phosphorylase B (unphosphorylated) to phosphorylase A.

It carries out the reaction [(1-&gt;4)-alpha-D-glucosyl](n) + phosphate = [(1-&gt;4)-alpha-D-glucosyl](n-1) + alpha-D-glucose 1-phosphate. Its activity is regulated as follows. Allosterically regulated through the non-covalent binding of metabolites, being activated by AMP and inhibited by ATP, ADP, and glucose-6-phosphate. The activity is also controlled by post-translational modifications including phosphorylation. Its function is as follows. Allosteric enzyme that catalyzes the rate-limiting step in glycogen catabolism, the phosphorolytic cleavage of glycogen to produce glucose-1-phosphate, and plays a central role in maintaining cellular and organismal glucose homeostasis. This is Glycogen phosphorylase, muscle form from Mus musculus (Mouse).